The chain runs to 183 residues: Shikimate kinase (183 aa).

18 to 23 (GVGKTT) is an ATP binding site. Threonine 22 lines the Mg(2+) pocket. Substrate-binding residues include aspartate 40, arginine 64, and glycine 86. Arginine 125 contributes to the ATP binding site. Position 143 (arginine 143) interacts with substrate.

The protein belongs to the shikimate kinase family. As to quaternary structure, monomer. It depends on Mg(2+) as a cofactor.

Its subcellular location is the cytoplasm. The enzyme catalyses shikimate + ATP = 3-phosphoshikimate + ADP + H(+). The protein operates within metabolic intermediate biosynthesis; chorismate biosynthesis; chorismate from D-erythrose 4-phosphate and phosphoenolpyruvate: step 5/7. Catalyzes the specific phosphorylation of the 3-hydroxyl group of shikimic acid using ATP as a cosubstrate. The protein is Shikimate kinase of Oceanobacillus iheyensis (strain DSM 14371 / CIP 107618 / JCM 11309 / KCTC 3954 / HTE831).